Consider the following 474-residue polypeptide: Peroxisome proliferator-activated receptor alpha (474 aa).

The segment at residues 106–180 (NLECRVCSDK…VGMSHNAIRF (75 aa)) is a DNA-binding region (nuclear receptor). NR C4-type zinc fingers lie at residues 109 to 129 (CRVC…CEGC) and 146 to 168 (CERM…FEKC). The region spanning 245 to 472 (FVIHDMETLC…HPLLQEIYRD (228 aa)) is the NR LBD domain.

It belongs to the nuclear hormone receptor family. NR1 subfamily. In terms of assembly, heterodimer with the retinoid X receptor. In terms of tissue distribution, ubiquitous.

The protein resides in the nucleus. Functionally, ligand-activated transcription factor. Key regulator of lipid metabolism. Activated by lipids. Receptor for peroxisome proliferators such as hypolipidemic drugs and fatty acids. Once activated by a ligand, the receptor binds to promoter elements of target genes. Regulates the peroxisomal beta-oxidation pathway of fatty acids. This chain is Peroxisome proliferator-activated receptor alpha (ppara), found in Xenopus laevis (African clawed frog).